The sequence spans 329 residues: Acetyl-coenzyme A carboxylase carboxyl transferase subunit alpha (329 aa).

Residues 40 to 294 (QLETLAARRR…KNALEKHLSE (255 aa)) form the CoA carboxyltransferase C-terminal domain.

This sequence belongs to the AccA family. Acetyl-CoA carboxylase is a heterohexamer composed of biotin carboxyl carrier protein (AccB), biotin carboxylase (AccC) and two subunits each of ACCase subunit alpha (AccA) and ACCase subunit beta (AccD).

It is found in the cytoplasm. The enzyme catalyses N(6)-carboxybiotinyl-L-lysyl-[protein] + acetyl-CoA = N(6)-biotinyl-L-lysyl-[protein] + malonyl-CoA. It functions in the pathway lipid metabolism; malonyl-CoA biosynthesis; malonyl-CoA from acetyl-CoA: step 1/1. Functionally, component of the acetyl coenzyme A carboxylase (ACC) complex. First, biotin carboxylase catalyzes the carboxylation of biotin on its carrier protein (BCCP) and then the CO(2) group is transferred by the carboxyltransferase to acetyl-CoA to form malonyl-CoA. In Prochlorococcus marinus (strain NATL1A), this protein is Acetyl-coenzyme A carboxylase carboxyl transferase subunit alpha.